We begin with the raw amino-acid sequence, 387 residues long: EARP and GARP complex-interacting protein 1 (387 aa).

M1 carries the post-translational modification N-acetylmethionine. WD repeat units lie at residues 132-172, 180-222, 226-266, and 270-310; these read TAHS…SQAV, GGKG…QIYC, AHGQ…EPVK, and EHSH…SEPF. A disordered region spans residues 310 to 334; it reads FGHLVDDDDISDQEDHRSEEKSKEP. At S320 the chain carries Phosphoserine. The segment covering 322–334 has biased composition (basic and acidic residues); sequence QEDHRSEEKSKEP. The WD 5 repeat unit spans residues 345–385; the sequence is EHEDSVYAVDWSSADPWLFASLSYDGRLVINRVPRALKYHI.

The protein belongs to the WD repeat EIPR1 family. Interacts with two multisubunit tethering complexes: EARP composed of VPS50, VPS51, VPS52 and VPS53 subunits and GARP complex composed of VPS51, VPS52, VPS53 and VPS54 subunits. Interacts with SNAP29.

The protein localises to the golgi apparatus. The protein resides in the trans-Golgi network. Its function is as follows. Acts as a component of endosomal retrieval machinery that is involved in protein transport from early endosomes to either recycling endosomes or the trans-Golgi network. Mediates the recruitment of Golgi-associated retrograde protein (GARP) complex to the trans-Golgi network and controls early endosome-to-Golgi transport of internalized protein. Promotes the recycling of internalized transferrin receptor (TFRC) to the plasma membrane through interaction with endosome-associated recycling protein (EARP) complex. Controls proper insulin distribution and secretion, and retention of cargo in mature dense core vesicles. Required for the stability of the endosome-associated retrograde protein (EARP) complex subunits and for proper localization and association of EARP with membranes. This Macaca fascicularis (Crab-eating macaque) protein is EARP and GARP complex-interacting protein 1.